The primary structure comprises 286 residues: Soluble epoxide hydrolase (286 aa).

The AB hydrolase-1 domain maps to 26–123 (YPLVLLHGWP…DLVERLFILD (98 aa)). D99 (nucleophile) is an active-site residue. Y209 functions as the Proton donor in the catalytic mechanism. H264 (proton acceptor) is an active-site residue.

It belongs to the AB hydrolase superfamily. Epoxide hydrolase family. As to quaternary structure, homotetramer.

Its subcellular location is the cytoplasm. It localises to the cell membrane. It carries out the reaction an epoxide + H2O = an ethanediol. Involved in catabolic degradation of epoxides. Shows highest activity towards C6 and C7 carbocyclic epoxides. Also active towards linear 1,2-epoxyalkanes. The polypeptide is Soluble epoxide hydrolase (Corynebacterium sp. (strain C12)).